A 161-amino-acid chain; its full sequence is Cyclic pyranopterin monophosphate synthase (161 aa).

Substrate-binding positions include Met75–His77 and Met115–Glu116. The active site involves Asp130.

This sequence belongs to the MoaC family. In terms of assembly, homohexamer; trimer of dimers.

It carries out the reaction (8S)-3',8-cyclo-7,8-dihydroguanosine 5'-triphosphate = cyclic pyranopterin phosphate + diphosphate. It functions in the pathway cofactor biosynthesis; molybdopterin biosynthesis. Its function is as follows. Catalyzes the conversion of (8S)-3',8-cyclo-7,8-dihydroguanosine 5'-triphosphate to cyclic pyranopterin monophosphate (cPMP). The sequence is that of Cyclic pyranopterin monophosphate synthase from Bacillus thuringiensis subsp. konkukian (strain 97-27).